The following is a 140-amino-acid chain: Histone H2B (140 aa).

A compositionally biased stretch (basic and acidic residues) spans 1–10 (MPPKAAEKKP). Positions 1 to 48 (MPPKAAEKKPSTGGKAPAGKAPAEKKEAGKKTAAAASGDKKKRGKTRK) are disordered. An N6-acetyllysine; alternate mark is found at Lys8 and Lys9. Glycyl lysine isopeptide (Lys-Gly) (interchain with G-Cter in SUMO); alternate cross-links involve residues Lys8 and Lys9. The segment covering 11–21 (STGGKAPAGKA) has biased composition (low complexity). Residue Lys15 is modified to N6-acetyllysine. Position 25 is an N6-acetyllysine; alternate (Lys25). A Glycyl lysine isopeptide (Lys-Gly) (interchain with G-Cter in SUMO); alternate cross-link involves residue Lys25. Lys26 is covalently cross-linked (Glycyl lysine isopeptide (Lys-Gly) (interchain with G-Cter in SUMO)). Lys134 participates in a covalent cross-link: Glycyl lysine isopeptide (Lys-Gly) (interchain with G-Cter in ubiquitin).

The protein belongs to the histone H2B family. As to quaternary structure, the nucleosome is a histone octamer containing two molecules each of H2A, H2B, H3 and H4 assembled in one H3-H4 heterotetramer and two H2A-H2B heterodimers. The octamer wraps approximately 147 bp of DNA. Monoubiquitinated by the ubc2-bre1 complex to form H2BK123ub1. H2BK123ub1 gives a specific tag for epigenetic transcriptional activation and is also prerequisite for H3K4me and H3K79me formation. H2BK123ub1 also modulates the formation of double-strand breaks during meiosis and is a prerequisite for DNA-damage checkpoint activation. In terms of processing, acetylated by gcn5 to form H2BK11ac and H2BK16ac. H2BK16ac can also be formed by esa1. Acetylation of N-terminal lysines and particularly formation of H2BK11acK16ac has a positive effect on transcription. Post-translationally, sumoylation to form H2BK6su or H2BK7su, and probably also H2BK16su or H2BK17su, occurs preferentially near the telomeres and represses gene transcription.

The protein resides in the nucleus. The protein localises to the chromosome. Core component of nucleosome. Nucleosomes wrap and compact DNA into chromatin, limiting DNA accessibility to the cellular machineries which require DNA as a template. Histones thereby play a central role in transcription regulation, DNA repair, DNA replication and chromosomal stability. DNA accessibility is regulated via a complex set of post-translational modifications of histones, also called histone code, and nucleosome remodeling. In Aspergillus clavatus (strain ATCC 1007 / CBS 513.65 / DSM 816 / NCTC 3887 / NRRL 1 / QM 1276 / 107), this protein is Histone H2B (htb1).